The primary structure comprises 112 residues: Peptidyl-prolyl cis-trans isomerase (112 aa).

A disordered region spans residues 1-22 (MGVEKQVISSGNGQDFPKPGDR). The 89-residue stretch at 20 to 108 (GDRITMHYTG…LFDVELLAIN (89 aa)) folds into the PPIase FKBP-type domain.

This sequence belongs to the FKBP-type PPIase family. FKBP1 subfamily.

Its subcellular location is the cytoplasm. It is found in the nucleus. It catalyses the reaction [protein]-peptidylproline (omega=180) = [protein]-peptidylproline (omega=0). In terms of biological role, PPIases accelerate the folding of proteins. It catalyzes the cis-trans isomerization of proline imidic peptide bonds in oligopeptides. Has an important role in sexual development and serves as the target for rapamycin action. The sequence is that of Peptidyl-prolyl cis-trans isomerase (fkh1) from Schizosaccharomyces pombe (strain 972 / ATCC 24843) (Fission yeast).